We begin with the raw amino-acid sequence, 284 residues long: MLSKQIPLGIYEKALPAGECWLERLQLAKTLGFDFVEMSVDETDDRLSRLNWSREQRLALVNAIVETGVRVPSMCLSAHRRFPLGSEDDAVRAQGLEIMRKAIQFAQDVGIRVIQLAGYDVYYQEANNETRRRFRDGLKESVEMASRAQVTLAMEIMDYPLMSSISKALGYAHYLNNPWFQLYPDIGNLSAWDNDVQMELQAGIGHIVAVHVKDTKPGVFKNVPFGEGVVDFERCFETLKQSGYCGPYLIEMWSETAEDPAAEVAKARDWVKARMAKAGMVEAA.

Belongs to the L-ribulose-5-phosphate 3-epimerase family.

The enzyme catalyses L-ribulose 5-phosphate = L-xylulose 5-phosphate. Its pathway is cofactor degradation; L-ascorbate degradation; D-xylulose 5-phosphate from L-ascorbate: step 3/4. Catalyzes the isomerization of L-xylulose-5-phosphate to L-ribulose-5-phosphate. Is involved in the anaerobic L-ascorbate utilization. This chain is L-ribulose-5-phosphate 3-epimerase UlaE, found in Escherichia coli (strain K12 / MC4100 / BW2952).